A 325-amino-acid chain; its full sequence is Phenylalanine--tRNA ligase alpha subunit (325 aa).

E251 contacts Mg(2+).

It belongs to the class-II aminoacyl-tRNA synthetase family. Phe-tRNA synthetase alpha subunit type 1 subfamily. Tetramer of two alpha and two beta subunits. Requires Mg(2+) as cofactor.

Its subcellular location is the cytoplasm. The catalysed reaction is tRNA(Phe) + L-phenylalanine + ATP = L-phenylalanyl-tRNA(Phe) + AMP + diphosphate + H(+). The chain is Phenylalanine--tRNA ligase alpha subunit (pheS) from Thermotoga maritima (strain ATCC 43589 / DSM 3109 / JCM 10099 / NBRC 100826 / MSB8).